The following is a 196-amino-acid chain: MADS-box transcription factor 32 (196 aa).

Residues 1–61 enclose the MADS-box domain; that stretch reads MGRGRSEIKR…GKLYHFLSPT (61 aa). In terms of domain architecture, K-box spans 85–175; the sequence is RQERRAELEK…CDKIAHAQTL (91 aa).

The protein resides in the nucleus. Functionally, probable transcription factor. The polypeptide is MADS-box transcription factor 32 (MADS32) (Oryza sativa subsp. japonica (Rice)).